We begin with the raw amino-acid sequence, 538 residues long: Natural resistance-associated macrophage protein 1 (538 aa).

The interval 1 to 36 (MTGDTDPPKQSRTQYGSISSSPSPGPPQVPPGGTYL) is disordered. At 1–54 (MTGDTDPPKQSRTQYGSISSSPSPGPPQVPPGGTYLSEKIPIPNAEPGTFSLRK) the chain is on the cytoplasmic side. Residues 55–75 (LWAFTGPGFLMSIAYLDPGNI) traverse the membrane as a helical segment. Topologically, residues 76-81 (QSDLQA) are extracellular. A helical membrane pass occupies residues 82–102 (GAVAGFKLLWVLLWATVLGLL). At 103 to 139 (CQRLAARLGVVTGKDLGEICHLYYPKVPRTLLWLNME) the chain is on the cytoplasmic side. Residues 140–160 (LAIVGSDMQEVIGTAIAFNLL) traverse the membrane as a helical segment. The Extracellular portion of the chain corresponds to 161-164 (SAGR). The helical transmembrane segment at 165 to 185 (IPLWGGVLITVVDTFFFLYLN) threads the bilayer. The Cytoplasmic portion of the chain corresponds to 186-193 (NYGLRKLE). A helical transmembrane segment spans residues 194–214 (AFFAFLIAIMAFTFGYEYVVA). Residues 215–240 (RPAQGALLRGLFLPSCSGCGQPELLQ) lie on the Extracellular side of the membrane. Residues 241-261 (AVGIVGAIIMPHNIYLHSALV) form a helical membrane-spanning segment. Residues 262-286 (KSREVDRTRREDIREANMYFLIEST) are Cytoplasmic-facing. Residues 287–307 (IALFVSFFINLFVMAVFGQAF) traverse the membrane as a helical segment. The Extracellular portion of the chain corresponds to 308-346 (YQQTNQAAFNICANSSLHDYAKIFPRNNLTVAVDFYQGG). Residues Asn321 and Asn335 are each glycosylated (N-linked (GlcNAc...) asparagine). A helical membrane pass occupies residues 347–367 (VILGCLFGPAALYIWAVGLLA). Residues 368–394 (AGQSSTMTGTYAGQFVMEGFLKLRWSR) lie on the Cytoplasmic side of the membrane. Residues 395 to 415 (FARLLLTRSCAILPALLVAVF) traverse the membrane as a helical segment. The Extracellular segment spans residues 416-432 (KELQDLSSLNDLLNVLQ). The helical transmembrane segment at 433–453 (SLLLPFAVLPILTFTSMPALM) threads the bilayer. The Cytoplasmic portion of the chain corresponds to 454-468 (QEFASGRVNKVITSS). The helical transmembrane segment at 469 to 489 (IMLLVCAINFYFLVSYLPSLP) threads the bilayer. The Extracellular portion of the chain corresponds to 490–492 (HPA). A helical membrane pass occupies residues 493–513 (YFGLVALLAVIYLGLTTYLVW). At 514 to 538 (TCLIAHGATLLVHSSHQHFLYGLLE) the chain is on the cytoplasmic side.

The protein belongs to the NRAMP family.

It localises to the late endosome membrane. Its subcellular location is the lysosome membrane. It carries out the reaction Zn(2+)(in) + H(+)(out) = Zn(2+)(out) + H(+)(in). It catalyses the reaction Fe(2+)(in) + H(+)(out) = Fe(2+)(out) + H(+)(in). The catalysed reaction is Mn(2+)(in) + H(+)(out) = Mn(2+)(out) + H(+)(in). In terms of biological role, macrophage-specific antiporter that fluxes metal ions in either direction against a proton gradient. Localized to late endosomal lysosomal membranes, delivers bivalent cations from the cytosol into these acidic compartments where they may directly affect antimicrobial activity. Involved in iron metabolism and host natural resistance to infection with intracellular parasites. Pathogen resistance involves sequestration of Fe(2+) and Mn(2+), cofactors of both prokaryotic and eukaryotic catalases and superoxide dismutases, not only to protect the macrophage against its own generation of reactive oxygen species, but to deny the cations to the pathogen for synthesis of its protective enzymes. This is Natural resistance-associated macrophage protein 1 (SLC11A1) from Sus scrofa (Pig).